A 424-amino-acid chain; its full sequence is Protein ImpB (424 aa).

Positions 2-189 (FALADINSFY…QPVGEVWGVG (188 aa)) constitute a UmuC domain.

Belongs to the DNA polymerase type-Y family.

Involved in UV protection and mutation. This chain is Protein ImpB (impB), found in Salmonella typhimurium.